The chain runs to 514 residues: Glutamate--cysteine ligase (514 aa).

This sequence belongs to the glutamate--cysteine ligase type 1 family. Type 1 subfamily.

It catalyses the reaction L-cysteine + L-glutamate + ATP = gamma-L-glutamyl-L-cysteine + ADP + phosphate + H(+). It functions in the pathway sulfur metabolism; glutathione biosynthesis; glutathione from L-cysteine and L-glutamate: step 1/2. The polypeptide is Glutamate--cysteine ligase (Enterobacter sp. (strain 638)).